The following is a 180-amino-acid chain: Protein SPO16 homolog (180 aa).

Homooligomer. Interacts with SHOC, SYCP1 and SYCE3.

The protein resides in the chromosome. Functionally, plays a key role in reinforcing the integrity of the central element of the synaptonemal complex (SC) thereby stabilizing SC, ensuring progression of meiotic prophase I in male and female germ cells. Promotes homologous recombination and crossing-over in meiotic prophase I via its association with SHOC1. Required for the localization of TEX11 and MSH4 to recombination intermediates. In Homo sapiens (Human), this protein is Protein SPO16 homolog.